Consider the following 310-residue polypeptide: MTQEPLIAIVGPTAVGKTALGIELAKTFGAEIISGDSMQVYRTMDIGTAKATVEEMAGIPHHLIDILEPGDTWTVSMFQEKALLAIASIRSRGKWPLLVGGTGLYVQALTHELSFGDAPSDSSFREEMELYASRFGNAALHGKLAKADPNAAEAIHANNVRRVIRALEVIHLTGKPFSEQENGLARPRFDNVLIGLEMERQALYERINRRVDAMMEAGLLEEVHRLYQRGIQGQAIQAIGYKELYAYFDGKCTYDEAIEALKTNSRRYAKRQLTWFKNRSDAVWFHLEEPEAKAKIFDYVHAFLAGKGFA.

Residue 11-18 (GPTAVGKT) coordinates ATP. 13–18 (TAVGKT) lines the substrate pocket. The interval 36-39 (DSMQ) is interaction with substrate tRNA.

This sequence belongs to the IPP transferase family. In terms of assembly, monomer. It depends on Mg(2+) as a cofactor.

It carries out the reaction adenosine(37) in tRNA + dimethylallyl diphosphate = N(6)-dimethylallyladenosine(37) in tRNA + diphosphate. In terms of biological role, catalyzes the transfer of a dimethylallyl group onto the adenine at position 37 in tRNAs that read codons beginning with uridine, leading to the formation of N6-(dimethylallyl)adenosine (i(6)A). The sequence is that of tRNA dimethylallyltransferase from Shouchella clausii (strain KSM-K16) (Alkalihalobacillus clausii).